A 479-amino-acid chain; its full sequence is MAQHTVYFPDAFLTQMREAMPSTLSFDDFLAACQRPLRRSIRVNTLKTSVADFLQLTAPYGWTLTPIPWCEEGFWIERDNEDALPLGSTAEHLSGLFYIQEASSMLPVAALFADGNAPQRVMDVAAAPGSKTTQIAARMNNEGAILANEFSASRVKVLHANISRCGISNVALTHFDGRVFGAAVPEMFDAILLDAPCSGEGVVRKDPDALKNWSPESNQEIAATQRELIDSAFHALRPGGTLVYSTCTLNREENEAVCLWLKETYPDAVEFLPLGDLFPGANKALTEEGFLHVFPQIYDCEGFFVARLRKTQAIPALPTPKYKVGNFPFSPVKDREAGQIRQAAASVGLNWDENLRLWQRDKELWLFPVGIEALIGKVRFSRLGIKLAETHNKGYRWQHEAVIALASPDNVNAFELTPQEAEEWYRGRDVYPQAAPVADDVLVTFQHQPIGLAKRIGSRLKNSYPRELVRDGKLFTGNA.

S-adenosyl-L-methionine contacts are provided by residues 125 to 131 (AAAPGSK), glutamate 149, aspartate 176, and aspartate 194. Catalysis depends on cysteine 247, which acts as the Nucleophile.

It belongs to the class I-like SAM-binding methyltransferase superfamily. RsmB/NOP family.

It localises to the cytoplasm. It carries out the reaction cytidine(1407) in 16S rRNA + S-adenosyl-L-methionine = 5-methylcytidine(1407) in 16S rRNA + S-adenosyl-L-homocysteine + H(+). Functionally, specifically methylates the cytosine at position 1407 (m5C1407) of 16S rRNA. In Escherichia coli O81 (strain ED1a), this protein is Ribosomal RNA small subunit methyltransferase F.